The primary structure comprises 432 residues: N-acylneuraminate cytidylyltransferase (432 aa).

Met-1 carries the post-translational modification N-acetylmethionine. Residues 1–38 (MDALEKGAVTSGPAPRGRPSRGRPPKLQRSRGAGRGLE) are disordered. Residues 15 to 31 (PRGRPSRGRPPKLQRSR) carry the BC1 motif motif. A compositionally biased stretch (basic residues) spans 18–29 (RPSRGRPPKLQR). Arg-35 and Arg-50 each carry omega-N-methylarginine. Arg-50, Asn-60, Arg-109, Ser-118, Ser-120, and Gln-141 together coordinate substrate. A BC2 motif motif is present at residues 198–204 (KRPRRQD). Arg-199 is an active-site residue. The BC3 motif signature appears at 267-274 (KEKLKEIK).

It belongs to the CMP-NeuNAc synthase family. In terms of assembly, homotetramer; the active enzyme is formed by a dimer of dimers. As to expression, highly expressed in brain and heart, and at intermediate level muscle and liver.

It is found in the nucleus. The enzyme catalyses an N-acylneuraminate + CTP = a CMP-N-acyl-beta-neuraminate + diphosphate. It functions in the pathway amino-sugar metabolism; N-acetylneuraminate metabolism. Functionally, catalyzes the activation of N-acetylneuraminic acid (NeuNAc) to cytidine 5'-monophosphate N-acetylneuraminic acid (CMP-NeuNAc), a substrate required for the addition of sialic acid. Has some activity toward NeuNAc, N-glycolylneuraminic acid (Neu5Gc) or 2-keto-3-deoxy-D-glycero-D-galacto-nononic acid (KDN). The protein is N-acylneuraminate cytidylyltransferase (Cmas) of Mus musculus (Mouse).